The chain runs to 875 residues: Receptor-like protein 33 (875 aa).

The N-terminal stretch at M1–A23 is a signal peptide. Topologically, residues V24–Q822 are extracellular. Residues N65, N103, N133, N146, and N181 are each glycosylated (N-linked (GlcNAc...) asparagine). 10 LRR repeats span residues F110 to N133, L134 to N157, F159 to L182, S183 to S205, L206 to L230, T231 to L254, I256 to I278, S280 to S302, P303 to L327, and N329 to H351. Residues N229 and N250 are each glycosylated (N-linked (GlcNAc...) asparagine). N299 carries an N-linked (GlcNAc...) asparagine glycan. Residues L352–C377 form an LRR 11; degenerate repeat. N-linked (GlcNAc...) asparagine glycosylation is found at N364, N395, and N411. 15 LRR repeats span residues F378–D401, L404–Q427, R428–Q451, M455–P477, P479–L502, R503–S528, L530–I549, K550–F573, T575–S596, L597–F619, P620–E643, L686–L710, K711–L734, R735–L758, and Y760–T783. 2 N-linked (GlcNAc...) asparagine glycosylation sites follow: N490 and N514. An N-linked (GlcNAc...) asparagine glycan is attached at N587. N633 carries an N-linked (GlcNAc...) asparagine glycan. Residues N717, N757, and N765 are each glycosylated (N-linked (GlcNAc...) asparagine). A helical membrane pass occupies residues V823–I843. Residues G844–S875 are Cytoplasmic-facing.

Belongs to the RLP family.

It is found in the cell membrane. This is Receptor-like protein 33 from Arabidopsis thaliana (Mouse-ear cress).